A 317-amino-acid chain; its full sequence is L-lactate dehydrogenase (317 aa).

Residues Val17, Asp38, Lys43, Tyr69, and 83 to 84 (GA) contribute to the NAD(+) site. The substrate site is built by Gln86 and Arg92. NAD(+)-binding positions include Ser105, 122–124 (ATN), and Ser147. 124-127 (NPVD) is a substrate binding site. Position 152-155 (152-155 (DTAR)) interacts with substrate. Beta-D-fructose 1,6-bisphosphate-binding residues include Arg157 and His172. His179 serves as the catalytic Proton acceptor. Phosphotyrosine is present on Tyr224. Position 233 (Thr233) interacts with substrate.

The protein belongs to the LDH/MDH superfamily. LDH family. Homotetramer.

The protein resides in the cytoplasm. It carries out the reaction (S)-lactate + NAD(+) = pyruvate + NADH + H(+). The protein operates within fermentation; pyruvate fermentation to lactate; (S)-lactate from pyruvate: step 1/1. With respect to regulation, allosterically activated by fructose 1,6-bisphosphate (FBP). In terms of biological role, catalyzes the conversion of lactate to pyruvate. This is L-lactate dehydrogenase from Geobacillus kaustophilus (strain HTA426).